The primary structure comprises 218 residues: Large ribosomal subunit protein uL3 (218 aa).

The segment at 126–169 (HGFSRGPMTHGSKNHRQPGSIGAGTTPGRIYPGKRMSGRYGGKK) is disordered.

The protein belongs to the universal ribosomal protein uL3 family. As to quaternary structure, part of the 50S ribosomal subunit. Forms a cluster with proteins L14 and L19.

Functionally, one of the primary rRNA binding proteins, it binds directly near the 3'-end of the 23S rRNA, where it nucleates assembly of the 50S subunit. This chain is Large ribosomal subunit protein uL3, found in Synechococcus sp. (strain CC9902).